The following is a 269-amino-acid chain: Thiazole synthase (269 aa).

Lys-105 (schiff-base intermediate with DXP) is an active-site residue. Residues Gly-166, 192–193, and 214–215 contribute to the 1-deoxy-D-xylulose 5-phosphate site; these read AG and NT. The tract at residues 245–269 is disordered; that stretch reads AMSAQDAAQPSTPVLGTPFWHHDHG.

It belongs to the ThiG family. In terms of assembly, homotetramer. Forms heterodimers with either ThiH or ThiS.

It is found in the cytoplasm. It catalyses the reaction [ThiS sulfur-carrier protein]-C-terminal-Gly-aminoethanethioate + 2-iminoacetate + 1-deoxy-D-xylulose 5-phosphate = [ThiS sulfur-carrier protein]-C-terminal Gly-Gly + 2-[(2R,5Z)-2-carboxy-4-methylthiazol-5(2H)-ylidene]ethyl phosphate + 2 H2O + H(+). It participates in cofactor biosynthesis; thiamine diphosphate biosynthesis. Catalyzes the rearrangement of 1-deoxy-D-xylulose 5-phosphate (DXP) to produce the thiazole phosphate moiety of thiamine. Sulfur is provided by the thiocarboxylate moiety of the carrier protein ThiS. In vitro, sulfur can be provided by H(2)S. This chain is Thiazole synthase, found in Paracidovorax citrulli (strain AAC00-1) (Acidovorax citrulli).